Reading from the N-terminus, the 414-residue chain is UDP-N-acetylglucosamine 1-carboxyvinyltransferase (414 aa).

Position 19–20 (19–20) interacts with phosphoenolpyruvate; the sequence is KN. R89 contacts UDP-N-acetyl-alpha-D-glucosamine. Residue C113 is the Proton donor of the active site. At C113 the chain carries 2-(S-cysteinyl)pyruvic acid O-phosphothioketal. Residues 118–122, D301, and V323 each bind UDP-N-acetyl-alpha-D-glucosamine; that span reads RPIDL.

Belongs to the EPSP synthase family. MurA subfamily.

The protein resides in the cytoplasm. The catalysed reaction is phosphoenolpyruvate + UDP-N-acetyl-alpha-D-glucosamine = UDP-N-acetyl-3-O-(1-carboxyvinyl)-alpha-D-glucosamine + phosphate. Its pathway is cell wall biogenesis; peptidoglycan biosynthesis. Functionally, cell wall formation. Adds enolpyruvyl to UDP-N-acetylglucosamine. This Bdellovibrio bacteriovorus (strain ATCC 15356 / DSM 50701 / NCIMB 9529 / HD100) protein is UDP-N-acetylglucosamine 1-carboxyvinyltransferase.